The primary structure comprises 386 residues: Methionine import ATP-binding protein MetN 2 (386 aa).

One can recognise an ABC transporter domain in the interval 32-272 (VIFDDVGKVF…PQHDATRALL (241 aa)). 69–76 (GRSGAGKS) contacts ATP.

This sequence belongs to the ABC transporter superfamily. Methionine importer (TC 3.A.1.24) family. In terms of assembly, the complex is composed of two ATP-binding proteins (MetN), two transmembrane proteins (MetI) and a solute-binding protein (MetQ).

It is found in the cell inner membrane. The enzyme catalyses L-methionine(out) + ATP + H2O = L-methionine(in) + ADP + phosphate + H(+). It catalyses the reaction D-methionine(out) + ATP + H2O = D-methionine(in) + ADP + phosphate + H(+). In terms of biological role, part of the ABC transporter complex MetNIQ involved in methionine import. Responsible for energy coupling to the transport system. The sequence is that of Methionine import ATP-binding protein MetN 2 from Paraburkholderia xenovorans (strain LB400).